The chain runs to 842 residues: Protein P (842 aa).

Positions 1 to 177 (MPLSYQHFRR…FCGSPYSWEQ (177 aa)) are terminal protein domain (TP). Residues 178–345 (ELHHGAFLDG…YCLTHLVNLL (168 aa)) are spacer. A disordered region spans residues 205–271 (SRPPVGSSIQ…RHAKNIASRP (67 aa)). Residues 223-239 (GPQSQQRPLDGSQQGRS) show a composition bias toward polar residues. Residues 346–689 (EDWGPCTEHG…YLNLYPVARQ (344 aa)) are polymerase/reverse transcriptase domain (RT). One can recognise a Reverse transcriptase domain in the interval 356–599 (KHHIRIPRTP…YSLNFMGYVI (244 aa)). Mg(2+)-binding residues include Asp-428, Asp-550, and Asp-551.

This sequence belongs to the hepadnaviridae P protein family.

It catalyses the reaction DNA(n) + a 2'-deoxyribonucleoside 5'-triphosphate = DNA(n+1) + diphosphate. The enzyme catalyses Endonucleolytic cleavage to 5'-phosphomonoester.. With respect to regulation, activated by host HSP70 and HSP40 in vitro to be able to bind the epsilon loop of the pgRNA. Because deletion of the RNase H region renders the protein partly chaperone-independent, the chaperones may be needed indirectly to relieve occlusion of the RNA-binding site by this domain. Inhibited by several reverse-transcriptase inhibitors: Lamivudine, Adefovir and Entecavir. In terms of biological role, multifunctional enzyme that converts the viral RNA genome into dsDNA in viral cytoplasmic capsids. This enzyme displays a DNA polymerase activity that can copy either DNA or RNA templates, and a ribonuclease H (RNase H) activity that cleaves the RNA strand of RNA-DNA heteroduplexes in a partially processive 3'- to 5'-endonucleasic mode. Neo-synthesized pregenomic RNA (pgRNA) are encapsidated together with the P protein, and reverse-transcribed inside the nucleocapsid. Initiation of reverse-transcription occurs first by binding the epsilon loop on the pgRNA genome, and is initiated by protein priming, thereby the 5'-end of (-)DNA is covalently linked to P protein. Partial (+)DNA is synthesized from the (-)DNA template and generates the relaxed circular DNA (RC-DNA) genome. After budding and infection, the RC-DNA migrates in the nucleus, and is converted into a plasmid-like covalently closed circular DNA (cccDNA). The activity of P protein does not seem to be necessary for cccDNA generation, and is presumably released from (+)DNA by host nuclear DNA repair machinery. In Hepatitis B virus genotype E subtype ayw4 (isolate Kou) (HBV-E), this protein is Protein P.